A 750-amino-acid chain; its full sequence is Photosystem I P700 chlorophyll a apoprotein A1 (750 aa).

The next 8 membrane-spanning stretches (helical) occupy residues 70–93, 156–179, 195–219, 291–309, 346–369, 385–411, 433–455, and 531–549; these read VFSA…FHGA, LYST…FHYH, LNHH…HVSL, TAHH…GHMY, WHAQ…HHMY, LSLF…IFMV, AIIS…LYIH, and FLVH…LILL. Positions 573 and 582 each coordinate [4Fe-4S] cluster. Transmembrane regions (helical) follow at residues 589–610 and 664–686; these read HVFL…HFSW and LSAY…MFLF. H675 is a chlorophyll a' binding site. The chlorophyll a site is built by M683 and Y691. Residue W692 participates in phylloquinone binding. A helical membrane pass occupies residues 724-744; that stretch reads AVGVAHYLLGGIATTWAFFLA.

This sequence belongs to the PsaA/PsaB family. As to quaternary structure, the PsaA/B heterodimer binds the P700 chlorophyll special pair and subsequent electron acceptors. PSI consists of a core antenna complex that captures photons, and an electron transfer chain that converts photonic excitation into a charge separation. The eukaryotic PSI reaction center is composed of at least 11 subunits. P700 is a chlorophyll a/chlorophyll a' dimer, A0 is one or more chlorophyll a, A1 is one or both phylloquinones and FX is a shared 4Fe-4S iron-sulfur center. serves as cofactor.

It is found in the plastid. The protein resides in the chloroplast thylakoid membrane. It catalyses the reaction reduced [plastocyanin] + hnu + oxidized [2Fe-2S]-[ferredoxin] = oxidized [plastocyanin] + reduced [2Fe-2S]-[ferredoxin]. Its function is as follows. PsaA and PsaB bind P700, the primary electron donor of photosystem I (PSI), as well as the electron acceptors A0, A1 and FX. PSI is a plastocyanin-ferredoxin oxidoreductase, converting photonic excitation into a charge separation, which transfers an electron from the donor P700 chlorophyll pair to the spectroscopically characterized acceptors A0, A1, FX, FA and FB in turn. Oxidized P700 is reduced on the lumenal side of the thylakoid membrane by plastocyanin. In Marchantia polymorpha (Common liverwort), this protein is Photosystem I P700 chlorophyll a apoprotein A1.